The following is a 397-amino-acid chain: Tryptophan synthase beta chain (397 aa).

Lysine 91 is subject to N6-(pyridoxal phosphate)lysine.

Belongs to the TrpB family. In terms of assembly, tetramer of two alpha and two beta chains. Pyridoxal 5'-phosphate serves as cofactor.

It carries out the reaction (1S,2R)-1-C-(indol-3-yl)glycerol 3-phosphate + L-serine = D-glyceraldehyde 3-phosphate + L-tryptophan + H2O. It participates in amino-acid biosynthesis; L-tryptophan biosynthesis; L-tryptophan from chorismate: step 5/5. The beta subunit is responsible for the synthesis of L-tryptophan from indole and L-serine. This chain is Tryptophan synthase beta chain, found in Bacillus cereus (strain G9842).